The primary structure comprises 446 residues: MQPVNIIGGGLAGSEAAWQLASRQIPVRLFEMRGREKTPAHSTDKLAELVCSNSFRSDDPNSNAVGVLHAEMRKMGSLIMMIADQHRVPAGSALAVDREGFAEAVTNRLQNHPLIEIHRERIDHIPDETTIIASGPLTSDSLANAITELTGRDALSFFDAIAPIVYRDSIDMDIAWFQSRWDKGDGHDYINCPLNKEEYLAFHAALLAGEKGDFHEWEKDTPYFEGCMPIEVMADRGIDTLRFGPMKPVGLDDPRTGRWPYGAVQLRQDNALGTLWNMVGFQTKLKYAEQIRIFRMIPGLEKAEFARLGGMHRNSFIRSPVLLDEYLRLKKQTNIRFAGQITGCEGYIESASIGLLAGIFTAADKLDKKVSSPPVESALGALLGHITKNADPDHYQPMNINFGLFPPISEKHPKKQRKAMMAERARKALDQWISEEAFLKSSILEQ.

8–13 (GGGLAG) contributes to the FAD binding site.

It belongs to the MnmG family. TrmFO subfamily. FAD is required as a cofactor.

It localises to the cytoplasm. It catalyses the reaction uridine(54) in tRNA + (6R)-5,10-methylene-5,6,7,8-tetrahydrofolate + NADH + H(+) = 5-methyluridine(54) in tRNA + (6S)-5,6,7,8-tetrahydrofolate + NAD(+). It carries out the reaction uridine(54) in tRNA + (6R)-5,10-methylene-5,6,7,8-tetrahydrofolate + NADPH + H(+) = 5-methyluridine(54) in tRNA + (6S)-5,6,7,8-tetrahydrofolate + NADP(+). Catalyzes the folate-dependent formation of 5-methyl-uridine at position 54 (M-5-U54) in all tRNAs. The protein is Methylenetetrahydrofolate--tRNA-(uracil-5-)-methyltransferase TrmFO of Zymomonas mobilis subsp. mobilis (strain ATCC 31821 / ZM4 / CP4).